Here is a 39-residue protein sequence, read N- to C-terminus: Cytochrome b559 subunit beta (39 aa).

A helical membrane pass occupies residues 14-30 (WLAVHGLAVPTVFFLGA). A heme-binding site is contributed by histidine 18.

This sequence belongs to the PsbE/PsbF family. Heterodimer of an alpha subunit and a beta subunit. PSII is composed of 1 copy each of membrane proteins PsbA, PsbB, PsbC, PsbD, PsbE, PsbF, PsbH, PsbI, PsbJ, PsbK, PsbL, PsbM, PsbT, PsbX, PsbY, PsbZ, Psb30/Ycf12, at least 3 peripheral proteins of the oxygen-evolving complex and a large number of cofactors. It forms dimeric complexes. Requires heme b as cofactor.

It is found in the plastid. Its subcellular location is the chloroplast thylakoid membrane. Its function is as follows. This b-type cytochrome is tightly associated with the reaction center of photosystem II (PSII). PSII is a light-driven water:plastoquinone oxidoreductase that uses light energy to abstract electrons from H(2)O, generating O(2) and a proton gradient subsequently used for ATP formation. It consists of a core antenna complex that captures photons, and an electron transfer chain that converts photonic excitation into a charge separation. In Physcomitrium patens (Spreading-leaved earth moss), this protein is Cytochrome b559 subunit beta.